The following is a 925-amino-acid chain: Probable glycoprotein hormone G-protein coupled receptor (925 aa).

A signal peptide spans 1-27 (MEDRGICPRVLQVLFLVVLILISPVYA). Residues 28 to 529 (AKNDACTKCS…EDIMGYVWLT (502 aa)) lie on the Extracellular side of the membrane. Residue asparagine 61 is glycosylated (N-linked (GlcNAc...) asparagine). LRR repeat units lie at residues 85 to 106 (KLKYLTLNNNKIKNIAKFRVKN), 110 to 131 (SLITLSYTHNIIETIENGAFDD), 134 to 155 (QLTQLDLSNNRLKEFPIFNKTS), 156 to 180 (SVTKLYLRGNPGITKLPRQSLGNLP), 181 to 202 (SLENLFMERTGIQEIPAGIFRQ), 203 to 224 (NTRLINLYFNKTKALERINEDA), 230 to 250 (SLKTLVLDETSVTSLPSRGLK), and 251 to 273 (NLHFLSLKDVPNFWQLPELDSIR). Asparagine 152 carries N-linked (GlcNAc...) asparagine glycosylation. N-linked (GlcNAc...) asparagine glycosylation is present at asparagine 212. A disordered region spans residues 299-493 (TMQKPSTEEN…PTLIPHSNHT (195 aa)). Residues 301–318 (QKPSTEENNGQTTASSPT) are compositionally biased toward polar residues. Residues 333–349 (STQPHTTSGFGGGGFPG) form a 1; truncated repeat. The segment at 333 to 461 (STQPHTTSGF…PGGGGFPGGG (129 aa)) is 5 X approximate tandem repeats. Residues 341 to 362 (GFGGGGFPGGGGGFPGGGGFPA) are compositionally biased toward gly residues. 3 consecutive repeat copies span residues 350–384 (GGGGFPGGGGFPAGGSKTSTQPHTTSGFGGGGFPG), 385–419 (GGGGFPGGGGFPAGGSKTSTQPHTTSGFGGGGFPG), and 420–453 (GGGGFPGGGGFPGGSNTSTQPHTTSNSGGGGFPG). Positions 365–375 (SKTSTQPHTTS) are enriched in polar residues. A compositionally biased stretch (gly residues) spans 376–397 (GFGGGGFPGGGGGFPGGGGFPA). Residues 400-410 (SKTSTQPHTTS) show a composition bias toward polar residues. The segment covering 411 to 432 (GFGGGGFPGGGGGFPGGGGFPG) has biased composition (gly residues). Positions 434-445 (SNTSTQPHTTSN) are enriched in polar residues. A glycan (N-linked (GlcNAc...) asparagine) is linked at asparagine 435. Gly residues predominate over residues 446–462 (SGGGGFPGGGGFPGGGT). The stretch at 454–461 (GGGFPGGG) is one 5; truncated repeat. Residues 476-493 (VHQSTADPPTLIPHSNHT) show a composition bias toward polar residues. Residue asparagine 495 is glycosylated (N-linked (GlcNAc...) asparagine). The chain crosses the membrane as a helical span at residues 530 to 551 (VVSFMVGAVALVANLVVALVLL). Over 552 to 561 (TSQRRLNVTR) the chain is Cytoplasmic. Residues 562-584 (FLMCNLAFADFILGLYIFILTSV) traverse the membrane as a helical segment. Topologically, residues 585-606 (SAVTRGDYHNYVQQWQNGAGCK) are extracellular. The chain crosses the membrane as a helical span at residues 607–628 (ILGFLAVFSSELSLFTLVMMTI). The Cytoplasmic segment spans residues 629–651 (ERFYAIVHAMHMNARLSFRKTVR). The chain crosses the membrane as a helical span at residues 652–673 (FMIGGWIFALVMAVVPLTGVSG). Residues 674–691 (YSKVAICLPFDVSDATST) lie on the Extracellular side of the membrane. A helical membrane pass occupies residues 692–712 (AYVAFLLLVNGASFISVMYLY). At 713–739 (SRMLYVVVSGGDMEGAPKRNDSKVAKR) the chain is on the cytoplasmic side. Residues 740–763 (MAILVFTDMLCWAPIAFFGLLAAF) form a helical membrane-spanning segment. The Extracellular segment spans residues 764–774 (GQTLLTVTQSK). The chain crosses the membrane as a helical span at residues 775–795 (ILLVFFFPINSICNPFLYAFF). The Cytoplasmic segment spans residues 796 to 925 (TKAFKRELFT…QKQKILQSPS (130 aa)). A disordered region spans residues 904-925 (VTKSSSPPHLKLQKQKILQSPS).

The protein belongs to the G-protein coupled receptor 1 family. FSH/LSH/TSH subfamily.

The protein localises to the cell membrane. Probable receptor for a glycoprotein hormone. This chain is Probable glycoprotein hormone G-protein coupled receptor, found in Anthopleura elegantissima (Green aggregating anemone).